We begin with the raw amino-acid sequence, 168 residues long: Large ribosomal subunit protein uL10 (168 aa).

Belongs to the universal ribosomal protein uL10 family. As to quaternary structure, part of the ribosomal stalk of the 50S ribosomal subunit. The N-terminus interacts with L11 and the large rRNA to form the base of the stalk. The C-terminus forms an elongated spine to which L12 dimers bind in a sequential fashion forming a multimeric L10(L12)X complex.

In terms of biological role, forms part of the ribosomal stalk, playing a central role in the interaction of the ribosome with GTP-bound translation factors. The sequence is that of Large ribosomal subunit protein uL10 from Pediococcus pentosaceus (strain ATCC 25745 / CCUG 21536 / LMG 10740 / 183-1w).